The sequence spans 156 residues: Transcription elongation factor GreA (156 aa).

The stretch at 46 to 67 (AEYHAAREKQSFIEGRIKELEA) forms a coiled coil.

This sequence belongs to the GreA/GreB family.

Its function is as follows. Necessary for efficient RNA polymerase transcription elongation past template-encoded arresting sites. The arresting sites in DNA have the property of trapping a certain fraction of elongating RNA polymerases that pass through, resulting in locked ternary complexes. Cleavage of the nascent transcript by cleavage factors such as GreA or GreB allows the resumption of elongation from the new 3'terminus. GreA releases sequences of 2 to 3 nucleotides. This chain is Transcription elongation factor GreA, found in Cereibacter sphaeroides (strain ATCC 17029 / ATH 2.4.9) (Rhodobacter sphaeroides).